Here is a 193-residue protein sequence, read N- to C-terminus: MRLCDRDIEAWLDEGRLSITPRPPVERINGATVDVRLGNKFRTFRGHTAAFIDLSGPKDEVSAALDRVMSDEIVLPDGEAFYLHPGELALAVTYESVTLPPDLVGWLDGRSSLARLGLMVHVTAHRIDPGWSGCIVLEFYNSGKLPLALRPGMLIGALSFEPLSGPAARPYNRRQDAKYRDQQGAVASRIDKD.

DCTP contacts are provided by residues 110 to 115 (RSSLAR), Asp-128, 136 to 138 (VLE), Tyr-171, Lys-178, and Gln-182. Glu-138 serves as the catalytic Proton donor/acceptor. Residues 169–193 (RPYNRRQDAKYRDQQGAVASRIDKD) are disordered.

This sequence belongs to the dCTP deaminase family. Homotrimer.

The catalysed reaction is dCTP + H2O + H(+) = dUTP + NH4(+). It participates in pyrimidine metabolism; dUMP biosynthesis; dUMP from dCTP (dUTP route): step 1/2. Its function is as follows. Catalyzes the deamination of dCTP to dUTP. In Salmonella arizonae (strain ATCC BAA-731 / CDC346-86 / RSK2980), this protein is dCTP deaminase.